The primary structure comprises 477 residues: Epoxyalcohol synthase CYP5164B1 (477 aa).

C421 is a heme binding site.

It belongs to the cytochrome P450 family. Requires heme as cofactor.

The enzyme catalyses (9S)-hydroperoxy-(10E,12Z)-octadecadienoate = (11S)-hydroxy-(9S,10S)-epoxy-(12Z)-octadecenoate. It catalyses the reaction (13S)-hydroperoxy-(9Z,11E)-octadecadienoate = 11-hydroxy-12,13-epoxy-(9Z)-octadecenoate. It functions in the pathway lipid metabolism; oxylipin biosynthesis. Its function is as follows. Cytochrome P450 epoxyalcohol synthase involved in the metabolism of oxylipins 'ectocarpins' natural products, such as hybridalactone, ecklonilactones and derivatives. Isomerizes the hydroperoxides into epoxyalcohols via epoxyallylic radical. Can use linoleic acid 9-hydroperoxide ((9S,10E,12Z)-9-hydroperoxy-10,12-octadecadienoic, 9-HPOD) as preferred substrate to produce (9S,10S,11S,12Z)-9,10-epoxy-11-hydroxy-12-octadecenoic acid and, to a lower extent, active with linoleate 13-hydroperoxide ((9Z,11E,13S)-13-hydroperoxy-9,11-octadecadienoic, 13-HPOD) to produce 11-hydroxy-12,13-epoxy-9-octadecenoic acid. No activity toward alpha-linolenic acid 9- and 13-hydroperoxides, and toward eicosapentaenoic acid 15-hydroperoxide. The polypeptide is Epoxyalcohol synthase CYP5164B1 (Ectocarpus siliculosus (Brown alga)).